A 527-amino-acid chain; its full sequence is Homeobox protein NOBOX (527 aa).

Disordered regions lie at residues Met1 to Lys126, Val194 to Pro245, Val271 to Pro306, and Glu488 to Glu527. The segment at residues Arg136–Glu195 is a DNA-binding region (homeobox). The segment covering Val194 to Lys203 has biased composition (basic and acidic residues). The segment covering Glu488–Glu506 has biased composition (polar residues). Positions Glu511 to Glu527 are enriched in basic and acidic residues.

As to expression, specifically expressed in ovaries and testes. In ovaries, expressed in oocytes from primordial through antral follicles but not in granulosa cells, theca cells and corpora lutea.

The protein localises to the nucleus. In terms of biological role, transcription factor which plays an essential role in postnatal follicle development. Binds preferentially to the DNA sequences 5'-TAATTG-3', 5'-TAGTTG-3' and 5'-TAATTA-3'. Directly regulates the transcription of POU5F1 and GDF9 during early folliculogenesis. The protein is Homeobox protein NOBOX (Nobox) of Mus musculus (Mouse).